Consider the following 487-residue polypeptide: 7-deoxyloganetin glucosyltransferase (487 aa).

Residue His25 is the Proton acceptor of the active site. Position 25 (His25) interacts with an anthocyanidin. Asp129 (charge relay) is an active-site residue. Residues Thr151, Gln366, His381, Trp384, Asn385, Ser386, and Glu389 each contribute to the UDP-alpha-D-glucose site. Ala404 is a binding site for an anthocyanidin. The UDP-alpha-D-glucose site is built by Glu405 and Gln406.

It belongs to the UDP-glycosyltransferase family. Expressed in roots.

It carries out the reaction 7-deoxyloganetin + UDP-alpha-D-glucose = 7-deoxyloganin + UDP + H(+). Its function is as follows. Iridoid glucosyltransferase acting exclusively on 7-deoxyloganetin. No activity with 7-deoxyloganetic acid. This is 7-deoxyloganetin glucosyltransferase (UGT85A23) from Catharanthus roseus (Madagascar periwinkle).